A 539-amino-acid chain; its full sequence is Chaperonin GroEL (539 aa).

ATP contacts are provided by residues 30–33, Lys51, 87–91, Gly415, 479–481, and Asp495; these read TLGP, DGTTT, and NAA.

The protein belongs to the chaperonin (HSP60) family. Forms a cylinder of 14 subunits composed of two heptameric rings stacked back-to-back. Interacts with the co-chaperonin GroES.

It localises to the cytoplasm. It catalyses the reaction ATP + H2O + a folded polypeptide = ADP + phosphate + an unfolded polypeptide.. Its function is as follows. Together with its co-chaperonin GroES, plays an essential role in assisting protein folding. The GroEL-GroES system forms a nano-cage that allows encapsulation of the non-native substrate proteins and provides a physical environment optimized to promote and accelerate protein folding. This Enterobacter asburiae protein is Chaperonin GroEL.